We begin with the raw amino-acid sequence, 109 residues long: Synaptobrevin-1 (109 aa).

The segment at 1 to 26 (MDAQGDAGAQGGSQGGPRPSNKRLQQ) is disordered. At 1–86 (MDAQGDAGAQ…KRKYWWKNIK (86 aa)) the chain is on the cytoplasmic side. Residues 23–83 (RLQQTQAQVD…ATLKRKYWWK (61 aa)) enclose the v-SNARE coiled-coil homology domain. A helical; Anchor for type IV membrane protein transmembrane segment spans residues 87–107 (MMIIMCAIVVILIIIIVLWAG). The Extracellular segment spans residues 108–109 (GK).

Belongs to the synaptobrevin family. Part of the SNARE core complex containing ric-4/SNAP25, snb-1/VAMP2 and unc-64/STX1A. This complex binds to cpx-1/CPLX1. In terms of tissue distribution, expressed in the nervous system notably the nerve ring, ventral cord and dorsal cord.

It localises to the cytoplasmic vesicle. It is found in the secretory vesicle. The protein resides in the synaptic vesicle membrane. Its subcellular location is the cell membrane. The protein localises to the synapse. It localises to the synaptosome. Its function is as follows. Involved in the targeting and/or fusion of transport vesicles to their target membrane. Acts in neuronal exocytosis of synaptic transmission. Likely to have a role in cholinergic transmisson. Required for viability, coordinated movement and M3 pharynx motor neuron function. This Caenorhabditis elegans protein is Synaptobrevin-1.